Reading from the N-terminus, the 213-residue chain is Ras-related protein Rab-4B (213 aa).

Position 2 is an N-acetylalanine (A2). GDP-binding residues include G18, T19, G20, K21, S22, and C23. GTP is bound by residues G18, T19, G20, K21, S22, C23, S37, H39, and T40. S22 lines the Mg(2+) pocket. A Switch 1 motif is present at residues 39-44; it reads HTIGVE. Positions 40 and 63 each coordinate Mg(2+). The Switch 2 signature appears at 65-74; the sequence is AGQERFRSVT. G66 contributes to the GTP binding site. Residue Q67 is modified to 5-glutamyl serotonin. 5 residues coordinate GDP: N121, K122, D124, A152, and L153. The GTP site is built by N121, K122, D124, A152, and L153. Residues S185 and S193 each carry the phosphoserine modification. Residues C211 and C213 are each lipidated (S-geranylgeranyl cysteine). Position 213 is a cysteine methyl ester (C213).

It belongs to the small GTPase superfamily. Rab family. In terms of assembly, interacts (GTP-bound form) with RUFY1; the interaction allows endosomal tethering and fusion. The cofactor is Mg(2+). In terms of processing, serotonylation of Gln-67 by TGM2 during activation and aggregation of platelets leads to constitutive activation of GTPase activity.

The protein resides in the cell membrane. It localises to the early endosome membrane. It carries out the reaction GTP + H2O = GDP + phosphate + H(+). Regulated by guanine nucleotide exchange factors (GEFs) which promote the exchange of bound GDP for free GTP. Regulated by GTPase activating proteins (GAPs) which increase the GTP hydrolysis activity. Inhibited by GDP dissociation inhibitors (GDIs). Its function is as follows. The small GTPases Rab are key regulators of intracellular membrane trafficking, from the formation of transport vesicles to their fusion with membranes. Rabs cycle between an inactive GDP-bound form and an active GTP-bound form that is able to recruit to membranes different set of downstream effectors directly responsible for vesicle formation, movement, tethering and fusion. RAB4B mediates endosomal tethering and fusion through the interaction with RUFY1 and RAB14. Acts as a regulator of platelet alpha-granule release during activation and aggregation of platelets. This Mus musculus (Mouse) protein is Ras-related protein Rab-4B.